Here is a 97-residue protein sequence, read N- to C-terminus: uncharacterized protein (97 aa).

Functionally, may have a regulatory function. This is an uncharacterized protein from Synechocystis sp. (strain ATCC 27184 / PCC 6803 / Kazusa).